The following is a 119-amino-acid chain: Ribonuclease P protein component (119 aa).

Belongs to the RnpA family. As to quaternary structure, consists of a catalytic RNA component (M1 or rnpB) and a protein subunit.

The catalysed reaction is Endonucleolytic cleavage of RNA, removing 5'-extranucleotides from tRNA precursor.. Its function is as follows. RNaseP catalyzes the removal of the 5'-leader sequence from pre-tRNA to produce the mature 5'-terminus. It can also cleave other RNA substrates such as 4.5S RNA. The protein component plays an auxiliary but essential role in vivo by binding to the 5'-leader sequence and broadening the substrate specificity of the ribozyme. The protein is Ribonuclease P protein component of Chlamydia muridarum (strain MoPn / Nigg).